A 56-amino-acid chain; its full sequence is Putative 2-Cys peroxiredoxin BAS1 (56 aa).

It belongs to the peroxiredoxin family. AhpC/Prx1 subfamily. Homodimer; disulfide-linked, upon oxidation.

The protein localises to the plastid. The protein resides in the chloroplast. It carries out the reaction a hydroperoxide + [thioredoxin]-dithiol = an alcohol + [thioredoxin]-disulfide + H2O. Thiol-specific peroxidase that catalyzes the reduction of hydrogen peroxide and organic hydroperoxides to water and alcohols, respectively. Plays a role in cell protection against oxidative stress by detoxifying peroxides. May be an antioxidant enzyme particularly in the developing shoot and photosynthesizing leaf. This is Putative 2-Cys peroxiredoxin BAS1 from Pinus strobus (Eastern white pine).